The sequence spans 218 residues: Small ribosomal subunit protein uS3c (218 aa).

Positions 47–118 (VQKHMRVSSG…RLNIAITRVA (72 aa)) constitute a KH type-2 domain.

The protein belongs to the universal ribosomal protein uS3 family. As to quaternary structure, part of the 30S ribosomal subunit.

It localises to the plastid. Its subcellular location is the chloroplast. This Illicium oligandrum (Star anise) protein is Small ribosomal subunit protein uS3c (rps3).